The primary structure comprises 368 residues: UDP-galactose/UDP-N-acetylglucosamine transporter srf-3 (368 aa).

Transmembrane regions (helical) follow at residues 72–92, 118–138, 145–165, 174–194, 203–223, 235–254, 273–293, and 317–337; these read FVST…CLFL, LKVC…YVAA, TFMI…VIIL, WFAL…GTKA, FVGF…GIYF, LWMR…FSAI, SIVW…AVCI, and IFLF…LVIF.

Belongs to the nucleotide-sugar transporter family. SLC35A subfamily. Expressed exclusively in pharyngeal cells g1 and g2, lateral seam cells, spermatheca and vas deferens.

The protein localises to the golgi apparatus membrane. Acts as a transporter of both UDP-galactose and UDP-N-acetylglucosamine into the Golgi lumen. Apparently transports UDP-galactose and UDP-N-acetylglucosamine simultaneously, and independently, by an unknown mechanism. Functions redundantly with nucleotide sugar transporter nstp-4. May be involved in gonadal development. The chain is UDP-galactose/UDP-N-acetylglucosamine transporter srf-3 (srf-3) from Caenorhabditis elegans.